The primary structure comprises 341 residues: UDP-3-O-(3-hydroxymyristoyl)glucosamine N-acyltransferase (341 aa).

The active-site Proton acceptor is the His-239.

Belongs to the transferase hexapeptide repeat family. LpxD subfamily. Homotrimer.

The enzyme catalyses a UDP-3-O-[(3R)-3-hydroxyacyl]-alpha-D-glucosamine + a (3R)-hydroxyacyl-[ACP] = a UDP-2-N,3-O-bis[(3R)-3-hydroxyacyl]-alpha-D-glucosamine + holo-[ACP] + H(+). The catalysed reaction is UDP-3-O-[(3R)-3-hydroxytetradecanoyl]-alpha-D-glucosamine + (3R)-hydroxytetradecanoyl-[ACP] = UDP-2-N,3-O-bis[(3R)-3-hydroxytetradecanoyl]-alpha-D-glucosamine + holo-[ACP] + H(+). Its pathway is glycolipid biosynthesis; lipid IV(A) biosynthesis; lipid IV(A) from (3R)-3-hydroxytetradecanoyl-[acyl-carrier-protein] and UDP-N-acetyl-alpha-D-glucosamine: step 3/6. Its function is as follows. Catalyzes the N-acylation of UDP-3-O-(hydroxytetradecanoyl)glucosamine using 3-hydroxytetradecanoyl-ACP as the acyl donor. Is involved in the biosynthesis of lipid A, a phosphorylated glycolipid that anchors the lipopolysaccharide to the outer membrane of the cell. The protein is UDP-3-O-(3-hydroxymyristoyl)glucosamine N-acyltransferase of Escherichia coli O157:H7.